Consider the following 235-residue polypeptide: Zein-alpha ZG99 (235 aa).

The first 21 residues, 1 to 21 (MAAKIFCLIMLLGLSASAATA), serve as a signal peptide directing secretion.

Belongs to the zein family.

Its function is as follows. Zeins are major seed storage proteins. The chain is Zein-alpha ZG99 from Zea mays (Maize).